The primary structure comprises 82 residues: Small ribosomal subunit protein bS16 (82 aa).

It belongs to the bacterial ribosomal protein bS16 family.

The polypeptide is Small ribosomal subunit protein bS16 (Francisella tularensis subsp. tularensis (strain FSC 198)).